The chain runs to 470 residues: uncharacterized protein (470 aa).

The signal sequence occupies residues 1 to 24 (MKKLVGSLAAISVLSATGFSYVGY).

This is an uncharacterized protein from Mycoplasma capricolum subsp. capricolum (strain California kid / ATCC 27343 / NCTC 10154).